A 488-amino-acid chain; its full sequence is UDP-N-acetylmuramate--L-alanine ligase (488 aa).

127–133 (GTHGKTT) serves as a coordination point for ATP.

Belongs to the MurCDEF family.

It is found in the cytoplasm. It carries out the reaction UDP-N-acetyl-alpha-D-muramate + L-alanine + ATP = UDP-N-acetyl-alpha-D-muramoyl-L-alanine + ADP + phosphate + H(+). It functions in the pathway cell wall biogenesis; peptidoglycan biosynthesis. Functionally, cell wall formation. This chain is UDP-N-acetylmuramate--L-alanine ligase, found in Shewanella sp. (strain MR-4).